The following is a 229-amino-acid chain: MKLSFHGQSTIYLEGNNKKVIVDPFISNNPKCDLNIETVQVDYIVLTHGHFDHFGDVVELAKKTGATVIGSAEMADYLSSYHGVENVHGMNIGGKANFDFGSVKFVQAFHSSSFTHENGIPVYLGMPMGIVFEVEGKTIYHTGDTGLFSDMSLIAKRHPVDVCFVPIGDNFTMGIDDASYAINEFIKPKISVPIHYDTFPLIEQDPQQFKDAVNVGDVQILKPGESVQF.

This sequence belongs to the UPF0173 family.

The sequence is that of UPF0173 metal-dependent hydrolase SAOUHSC_01815 from Staphylococcus aureus (strain NCTC 8325 / PS 47).